A 257-amino-acid chain; its full sequence is Deoxyribose-phosphate aldolase (257 aa).

D102 functions as the Proton donor/acceptor in the catalytic mechanism. K166 acts as the Schiff-base intermediate with acetaldehyde in catalysis. K198 serves as the catalytic Proton donor/acceptor.

Belongs to the DeoC/FbaB aldolase family. DeoC type 2 subfamily.

It is found in the cytoplasm. It carries out the reaction 2-deoxy-D-ribose 5-phosphate = D-glyceraldehyde 3-phosphate + acetaldehyde. It functions in the pathway carbohydrate degradation; 2-deoxy-D-ribose 1-phosphate degradation; D-glyceraldehyde 3-phosphate and acetaldehyde from 2-deoxy-alpha-D-ribose 1-phosphate: step 2/2. Its function is as follows. Catalyzes a reversible aldol reaction between acetaldehyde and D-glyceraldehyde 3-phosphate to generate 2-deoxy-D-ribose 5-phosphate. In Shewanella woodyi (strain ATCC 51908 / MS32), this protein is Deoxyribose-phosphate aldolase.